Consider the following 482-residue polypeptide: Putative metabolite transport protein YfiG (482 aa).

Residues 1-29 lie on the Cytoplasmic side of the membrane; it reads MSTKKKEAVIGKESLAHKGLLRTITLVST. Residues 30–50 form a helical membrane-spanning segment; the sequence is FGGLLFGYDTGVINGALPFMA. At 51 to 59 the chain is on the extracellular side; the sequence is TAGQLNLTP. A helical membrane pass occupies residues 60-80; sequence VTEGLVASSLLLGAAFGAMFG. Residues 81 to 92 are Cytoplasmic-facing; the sequence is GRLSDRHGRRKT. Residues 93 to 113 form a helical membrane-spanning segment; sequence ILYLALLFIAATLGCTFSPNA. Residues 114-120 lie on the Extracellular side of the membrane; the sequence is SVMIAFR. The chain crosses the membrane as a helical span at residues 121 to 141; that stretch reads FLLGLAVGCASVTVPTFLAEI. Residues 142–155 are Cytoplasmic-facing; sequence SPAERRGRIVTQNE. A helical membrane pass occupies residues 156–176; the sequence is LMIVIGQLLAYTFNAIIGSTM. At 177 to 184 the chain is on the extracellular side; that stretch reads GESANVWR. Residues 185 to 205 traverse the membrane as a helical segment; the sequence is YMLVIATLPAVVLWFGMLIVP. Residues 206 to 263 are Cytoplasmic-facing; that stretch reads ESPRWLAAKGRMGDALRVLRQIREDSQAQQEIKEIKHAIEGTAKKAGFHDFQEPWIRR. The chain crosses the membrane as a helical span at residues 264 to 284; that stretch reads ILFIGIGIAIVQQITGVNSIM. Over 285–301 the chain is Extracellular; it reads YYGTEILREAGFQTEAA. The helical transmembrane segment at 302-322 threads the bilayer; the sequence is LIGNIANGVISVIAVIFGIWL. Over 323–331 the chain is Cytoplasmic; the sequence is LGKVRRRPM. 2 consecutive transmembrane segments (helical) span residues 332 to 352 and 353 to 373; these read LIIGQIGTMTALLLIGILSIV and LEGTPALPYVVLSLTILFLAF. Residues 374–400 lie on the Cytoplasmic side of the membrane; it reads QQTAISTVTWLMLSEIFPMHVRGLGMG. The chain crosses the membrane as a helical span at residues 401–421; sequence ISTFCLWTANFLIGFTFPILL. Topologically, residues 422-423 are extracellular; the sequence is NH. A helical membrane pass occupies residues 424-444; it reads IGMSATFFIFVAMNILAILFV. Residues 445 to 482 are Cytoplasmic-facing; the sequence is KKYVPETKGRSLEQLEHSFRQYGRRADQEIQNQTTHLS.

Belongs to the major facilitator superfamily. Sugar transporter (TC 2.A.1.1) family.

It localises to the cell membrane. This is Putative metabolite transport protein YfiG (yfiG) from Bacillus subtilis (strain 168).